The primary structure comprises 521 residues: Lipid-translocating exporter-like protein RTA1 (521 aa).

7 consecutive transmembrane segments (helical) span residues Gly-186–Cys-206, Ala-211–Leu-231, Leu-249–Ala-269, Val-292–Ser-312, Leu-332–Phe-352, Thr-371–Val-391, and Glu-418–Val-438. Residues Thr-493–Thr-521 form a disordered region.

Belongs to the lipid-translocating exporter (LTE) (TC 9.A.26.1) family.

The protein resides in the membrane. Its function is as follows. Lipid-translocating exporter-like protein; part of the gene cluster that mediates the biosynthesis of phomenoic acid, a long chain aliphatic carboxylic acid that does not appear to be essential for pathogenicity but may play a role in allowing to outcompete other fungi in the environmental niche via its antifungal properties. The protein is Lipid-translocating exporter-like protein RTA1 of Leptosphaeria maculans (strain JN3 / isolate v23.1.3 / race Av1-4-5-6-7-8) (Blackleg fungus).